Here is a 649-residue protein sequence, read N- to C-terminus: 1,4-alpha-glucan branching enzyme GlgB (649 aa).

Aspartate 315 functions as the Nucleophile in the catalytic mechanism. Catalysis depends on glutamate 366, which acts as the Proton donor.

Belongs to the glycosyl hydrolase 13 family. GlgB subfamily. Monomer.

The catalysed reaction is Transfers a segment of a (1-&gt;4)-alpha-D-glucan chain to a primary hydroxy group in a similar glucan chain.. It functions in the pathway glycan biosynthesis; glycogen biosynthesis. In terms of biological role, catalyzes the formation of the alpha-1,6-glucosidic linkages in glycogen by scission of a 1,4-alpha-linked oligosaccharide from growing alpha-1,4-glucan chains and the subsequent attachment of the oligosaccharide to the alpha-1,6 position. This is 1,4-alpha-glucan branching enzyme GlgB from Ligilactobacillus salivarius (strain UCC118) (Lactobacillus salivarius).